The primary structure comprises 179 residues: Large ribosomal subunit protein uL5 (179 aa).

Belongs to the universal ribosomal protein uL5 family. In terms of assembly, part of the 50S ribosomal subunit; part of the 5S rRNA/L5/L18/L25 subcomplex. Contacts the 5S rRNA and the P site tRNA. Forms a bridge to the 30S subunit in the 70S ribosome.

This is one of the proteins that bind and probably mediate the attachment of the 5S RNA into the large ribosomal subunit, where it forms part of the central protuberance. In the 70S ribosome it contacts protein S13 of the 30S subunit (bridge B1b), connecting the 2 subunits; this bridge is implicated in subunit movement. Contacts the P site tRNA; the 5S rRNA and some of its associated proteins might help stabilize positioning of ribosome-bound tRNAs. The chain is Large ribosomal subunit protein uL5 from Desulfitobacterium hafniense (strain Y51).